Here is a 556-residue protein sequence, read N- to C-terminus: Formate--tetrahydrofolate ligase (556 aa).

65–72 (TPAGEGKT) serves as a coordination point for ATP.

This sequence belongs to the formate--tetrahydrofolate ligase family.

The enzyme catalyses (6S)-5,6,7,8-tetrahydrofolate + formate + ATP = (6R)-10-formyltetrahydrofolate + ADP + phosphate. Its pathway is one-carbon metabolism; tetrahydrofolate interconversion. This Peptoclostridium acidaminophilum (Eubacterium acidaminophilum) protein is Formate--tetrahydrofolate ligase.